The chain runs to 672 residues: Acetoacetyl-CoA synthetase (672 aa).

It belongs to the ATP-dependent AMP-binding enzyme family.

It is found in the cytoplasm. Its subcellular location is the cytosol. It carries out the reaction acetoacetate + ATP + CoA = acetoacetyl-CoA + AMP + diphosphate. Functionally, activates acetoacetate to acetoacetyl-CoA. The chain is Acetoacetyl-CoA synthetase (aacs) from Xenopus tropicalis (Western clawed frog).